The chain runs to 715 residues: Fatty acid oxidation complex subunit alpha (715 aa).

The tract at residues 1 to 190 (MIYEGKAITV…KVGAVDAVVA (190 aa)) is enoyl-CoA hydratase/isomerase. Substrate is bound at residue Asp297. The interval 312–715 (RDVKQAAVLG…MAKNGQSFFG (404 aa)) is 3-hydroxyacyl-CoA dehydrogenase. NAD(+)-binding positions include Met325, Asp344, 401-403 (VVE), Lys408, and Ser430. His451 acts as the For 3-hydroxyacyl-CoA dehydrogenase activity in catalysis. Residue Asn454 coordinates NAD(+). Substrate is bound by residues Asn501 and Tyr660.

In the N-terminal section; belongs to the enoyl-CoA hydratase/isomerase family. This sequence in the C-terminal section; belongs to the 3-hydroxyacyl-CoA dehydrogenase family. In terms of assembly, heterotetramer of two alpha chains (FadB) and two beta chains (FadA).

It carries out the reaction a (3S)-3-hydroxyacyl-CoA + NAD(+) = a 3-oxoacyl-CoA + NADH + H(+). It catalyses the reaction a (3S)-3-hydroxyacyl-CoA = a (2E)-enoyl-CoA + H2O. The enzyme catalyses a 4-saturated-(3S)-3-hydroxyacyl-CoA = a (3E)-enoyl-CoA + H2O. The catalysed reaction is (3S)-3-hydroxybutanoyl-CoA = (3R)-3-hydroxybutanoyl-CoA. It carries out the reaction a (3Z)-enoyl-CoA = a 4-saturated (2E)-enoyl-CoA. It catalyses the reaction a (3E)-enoyl-CoA = a 4-saturated (2E)-enoyl-CoA. The protein operates within lipid metabolism; fatty acid beta-oxidation. In terms of biological role, involved in the aerobic and anaerobic degradation of long-chain fatty acids via beta-oxidation cycle. Catalyzes the formation of 3-oxoacyl-CoA from enoyl-CoA via L-3-hydroxyacyl-CoA. It can also use D-3-hydroxyacyl-CoA and cis-3-enoyl-CoA as substrate. This Pseudomonas fluorescens (strain SBW25) protein is Fatty acid oxidation complex subunit alpha.